A 95-amino-acid polypeptide reads, in one-letter code: Large ribosomal subunit protein uL23 (95 aa).

Belongs to the universal ribosomal protein uL23 family. As to quaternary structure, part of the 50S ribosomal subunit. Contacts protein L29, and trigger factor when it is bound to the ribosome.

Functionally, one of the early assembly proteins it binds 23S rRNA. One of the proteins that surrounds the polypeptide exit tunnel on the outside of the ribosome. Forms the main docking site for trigger factor binding to the ribosome. In Coxiella burnetii (strain CbuK_Q154) (Coxiella burnetii (strain Q154)), this protein is Large ribosomal subunit protein uL23.